A 666-amino-acid chain; its full sequence is MTGTPKTQEGAKDLEVDMNKTEVTPRLWTTCRDGEVLLRLSKHGPGHETPMTIPEFFRESVNRFGTYPALASKNGKKWEILNFNQYYEACRKAAKSLIKLGLERFHGVGILGFNSAEWFITAVGAILAGGLCVGIYATNSAEVCQYVITHAKVNILLVENDQQLQKILSIPQSSLEPLKAIIQYRLPMKKNNNLYSWDDFMELGRSIPDTQLEQVIESQKANQCAVLIYTSGTTGIPKGVMLSHDNITWIAGAVTKDFKLTDKHETVVSYLPLSHIAAQMMDIWVPIKIGALTYFAQADALKGTLVSTLKEVKPTVFIGVPQIWEKIHEMVKKNSAKSMGLKKKAFVWARNIGFKVNSKKMLGKYNTPVSYRMAKTLVFSKVKTSLGLDHCHSFISGTAPLNQETAEFFLSLDIPIGELYGLSESSGPHTISNQNNYRLLSCGKILTGCKNMLFQQNKDGIGEICLWGRHIFMGYLESETETTEAIDDEGWLHSGDLGQLDGLGFLYVTGHIKEILITAGGENVPPIPVETLVKKKIPIISNAMLVGDKLKFLSMLLTLKCEMNQMSGEPLDKLNFEAINFCRGLGSQASTVTEIVKQQDPLVYKAIQQGINAVNQEAMNNAQRIEKWVILEKDFSIYGGELGPMMKLKRHFVAQKYKKQIDHMYH.

Residues 230-238, 418-423, D496, and R624 each bind ATP; these read TSGTTGIPK and ELYGLS.

It belongs to the ATP-dependent AMP-binding enzyme family. Bubblegum subfamily. Testis-specific.

The protein localises to the cytoplasm. Its subcellular location is the membrane. It catalyses the reaction a long-chain fatty acid + ATP + CoA = a long-chain fatty acyl-CoA + AMP + diphosphate. The catalysed reaction is (5Z,8Z,11Z,14Z)-eicosatetraenoate + ATP + CoA = (5Z,8Z,11Z,14Z)-eicosatetraenoyl-CoA + AMP + diphosphate. It carries out the reaction hexadecanoate + ATP + CoA = hexadecanoyl-CoA + AMP + diphosphate. The enzyme catalyses (9Z)-octadecenoate + ATP + CoA = (9Z)-octadecenoyl-CoA + AMP + diphosphate. It catalyses the reaction (9Z,12Z)-octadecadienoate + ATP + CoA = (9Z,12Z)-octadecadienoyl-CoA + AMP + diphosphate. The catalysed reaction is tetracosanoate + ATP + CoA = tetracosanoyl-CoA + AMP + diphosphate. Its function is as follows. Catalyzes the conversion of fatty acids such as long chain and very long-chain fatty acids to their active form acyl-CoAs for both synthesis of cellular lipids, and degradation via beta-oxidation. Can activate diverse saturated, monosaturated and polyunsaturated fatty acids. Has increased ability to activate oleic and linoleic acid. May play a role in spermatogenesis. This Homo sapiens (Human) protein is Long-chain-fatty-acid--CoA ligase ACSBG2.